The primary structure comprises 143 residues: Large ribosomal subunit protein uL11 (143 aa).

The protein belongs to the universal ribosomal protein uL11 family. In terms of assembly, part of the ribosomal stalk of the 50S ribosomal subunit. Interacts with L10 and the large rRNA to form the base of the stalk. L10 forms an elongated spine to which L12 dimers bind in a sequential fashion forming a multimeric L10(L12)X complex. One or more lysine residues are methylated.

Its function is as follows. Forms part of the ribosomal stalk which helps the ribosome interact with GTP-bound translation factors. The chain is Large ribosomal subunit protein uL11 from Burkholderia cenocepacia (strain HI2424).